The chain runs to 398 residues: CCA-adding enzyme (398 aa).

Positions 32 and 35 each coordinate ATP. Residues glycine 32 and arginine 35 each coordinate CTP. Residues aspartate 45 and aspartate 47 each contribute to the Mg(2+) site. Residues arginine 116, aspartate 159, arginine 162, arginine 165, and arginine 168 each coordinate ATP. CTP contacts are provided by arginine 116, aspartate 159, arginine 162, arginine 165, and arginine 168.

It belongs to the tRNA nucleotidyltransferase/poly(A) polymerase family. Bacterial CCA-adding enzyme type 3 subfamily. In terms of assembly, homodimer. It depends on Mg(2+) as a cofactor.

The catalysed reaction is a tRNA precursor + 2 CTP + ATP = a tRNA with a 3' CCA end + 3 diphosphate. It catalyses the reaction a tRNA with a 3' CCA end + 2 CTP + ATP = a tRNA with a 3' CCACCA end + 3 diphosphate. Functionally, catalyzes the addition and repair of the essential 3'-terminal CCA sequence in tRNAs without using a nucleic acid template. Adds these three nucleotides in the order of C, C, and A to the tRNA nucleotide-73, using CTP and ATP as substrates and producing inorganic pyrophosphate. tRNA 3'-terminal CCA addition is required both for tRNA processing and repair. Also involved in tRNA surveillance by mediating tandem CCA addition to generate a CCACCA at the 3' terminus of unstable tRNAs. While stable tRNAs receive only 3'-terminal CCA, unstable tRNAs are marked with CCACCA and rapidly degraded. The polypeptide is CCA-adding enzyme (Lactobacillus johnsonii (strain CNCM I-12250 / La1 / NCC 533)).